The sequence spans 878 residues: Outer membrane usher protein FimD (878 aa).

The signal sequence occupies residues 1 to 45; sequence MSYLNLRLYQRNTQCLHIRKHRLAGFFVRLVVACAFAAQAPLSSA. Cys-855 and Cys-877 are disulfide-bonded.

This sequence belongs to the fimbrial export usher family.

It localises to the cell outer membrane. Its function is as follows. Involved in the export and assembly of FimA fimbrial subunits across the outer membrane. This chain is Outer membrane usher protein FimD (fimD), found in Escherichia coli (strain K12).